A 1181-amino-acid polypeptide reads, in one-letter code: Putative type II restriction enzyme and methyltransferase RM.MjaORFECS2P (1181 aa).

In the C-terminal section; belongs to the N(4)/N(6)-methyltransferase family.

It carries out the reaction Endonucleolytic cleavage of DNA to give specific double-stranded fragments with terminal 5'-phosphates.. It catalyses the reaction a 2'-deoxyadenosine in DNA + S-adenosyl-L-methionine = an N(6)-methyl-2'-deoxyadenosine in DNA + S-adenosyl-L-homocysteine + H(+). Functionally, probably a G subtype restriction enzyme that recognizes an undetermined sequence and cleaves at an undetermined site. Probably also acts as an alpha subtype methylase, presumably on the same sequence. This chain is Putative type II restriction enzyme and methyltransferase RM.MjaORFECS2P, found in Methanocaldococcus jannaschii (strain ATCC 43067 / DSM 2661 / JAL-1 / JCM 10045 / NBRC 100440) (Methanococcus jannaschii).